Reading from the N-terminus, the 256-residue chain is Stanniocalcin (256 aa).

Residues 1-18 (MLAKFGLCAVFLVLGTAA) form the signal peptide. Positions 19–33 (TFDTDPEEASPRRAR) are excised as a propeptide. A glycan (N-linked (GlcNAc...) asparagine) is linked at N62.

It belongs to the stanniocalcin family. As to quaternary structure, homodimer; disulfide-linked. As to expression, produced and secreted by the corpuscles of Stannius.

The protein resides in the secreted. Its function is as follows. Its primary function is the prevention of hypercalcemia. Upon release into the circulation, it lowers calcium transport by the gills, thereby reducing its rate of influx from the environment into the extracellular compartment. STC also stimulates phosphate reabsorption by renal proximal tubules. The consequence of this action is increased levels of plasma phosphate, which combines with excess calcium and promotes its disposal into bone and scales. The polypeptide is Stanniocalcin (stc) (Oncorhynchus kisutch (Coho salmon)).